We begin with the raw amino-acid sequence, 693 residues long: Pentatricopeptide repeat-containing protein At2g19280 (693 aa).

PPR repeat units follow at residues 200-234, 235-269, 270-304, 305-339, 340-370, 372-406, 407-441, 442-476, 477-511, 512-546, 547-581, 582-616, and 617-651; these read LETVFSILIDCCIRERKVNMALKLTYKVDQFGIFP, SRGVCISLLKEILRVHGLELAREFVEHMLSRGRHL, NAAVLSLFIRKYCSDGYFDKGWELLMGMKHYGIRP, DIVAFTVFIDKLCKAGFLKEATSVLFKLKLFGISQ, DSVSVSSVIDGFCKVGKPEEAIKLIHSFRLR, NIFVYSSFLSNICSTGDMLRASTIFQEIFELGLLP, DCVCYTTMIDGYCNLGRTDKAFQYFGALLKSGNPP, SLTTSTILIGACSRFGSISDAESVFRNMKTEGLKL, DVVTYNNLMHGYGKTHQLNKVFELIDEMRSAGISP, DVATYNILIHSMVVRGYIDEANEIISELIRRGFVP, STLAFTDVIGGFSKRGDFQEAFILWFYMADLRMKP, DVVTCSALLHGYCKAQRMEKAIVLFNKLLDAGLKP, and DVVLYNTLIHGYCSVGDIEKACELIGLMVQRGMLP.

Belongs to the PPR family. P subfamily.

This is Pentatricopeptide repeat-containing protein At2g19280 from Arabidopsis thaliana (Mouse-ear cress).